A 236-amino-acid polypeptide reads, in one-letter code: Small ribosomal subunit protein uS2c (236 aa).

This sequence belongs to the universal ribosomal protein uS2 family.

Its subcellular location is the plastid. It localises to the chloroplast. This is Small ribosomal subunit protein uS2c (rps2) from Aethionema grandiflorum (Persian stone-cress).